Consider the following 539-residue polypeptide: Chaperonin GroEL (539 aa).

Residues 29-32 (TIGP), 86-90 (DGTTT), Gly-413, 476-478 (NAA), and Asp-492 contribute to the ATP site.

This sequence belongs to the chaperonin (HSP60) family. Forms a cylinder of 14 subunits composed of two heptameric rings stacked back-to-back. Interacts with the co-chaperonin GroES.

It is found in the cytoplasm. The enzyme catalyses ATP + H2O + a folded polypeptide = ADP + phosphate + an unfolded polypeptide.. Together with its co-chaperonin GroES, plays an essential role in assisting protein folding. The GroEL-GroES system forms a nano-cage that allows encapsulation of the non-native substrate proteins and provides a physical environment optimized to promote and accelerate protein folding. The protein is Chaperonin GroEL of Leuconostoc mesenteroides subsp. mesenteroides (strain ATCC 8293 / DSM 20343 / BCRC 11652 / CCM 1803 / JCM 6124 / NCDO 523 / NBRC 100496 / NCIMB 8023 / NCTC 12954 / NRRL B-1118 / 37Y).